A 573-amino-acid polypeptide reads, in one-letter code: MAFNFNWSPLMADAGFYTRAQDLLTAALNKSPKPPIIVDDIAVTELNLGSIPPELEILEVGDLAEDRFRGIFKMSYSGDAFLTLKTRVQANPLNTFLITRPAYASPKPLAAASGLTIPLQITLSNFRLSGFVVLVFSKQKGITVVFRNDPLESLKVSSTFDSIPSVRDYLQREIEGQLRILFMDELPAIIHRLSLRLWVPEYRGLEAGIPETAIPSSLGPGEDTLLNPPKDPVDASGNLLSSAEIASLSLDSGVEMHSLFSQKNLLRLAALTNSQRTLSLFTPSIREVMFRARTGLADQGEGLGSGLMSPGSPALSRTHSHISSPLSSFQDSSSVLSLQQRSTTAASSFSGYGLSLGAGRHTKARPTKKRKKRVVDLRKQSKPTDPEITSADGGYTETSTASTTFSSSTVPEEVNDDPVTPPLSPETTIRFPNRQHRFSTSEGKVIARAPAQQLTYSEPSHSALHTQTANPVPAVPLHAEGAAVPPQQALVFGDEHLGSREKSMEAQSSHGPNPGLSITDAAPNSSILEQAWMMKMANEIARRIQEQNSLVNNNYPGPWEQTRARTPPPAYGQ.

Residues 1-195 (MAFNFNWSPL…LPAIIHRLSL (195 aa)) form the SMP-LTD domain. Disordered regions lie at residues 301–326 (EGLG…SSPL), 349–433 (FSGY…RFPN), 499–521 (SREK…ITDA), and 550–573 (LVNN…AYGQ). The segment covering 306–316 (GLMSPGSPALS) has biased composition (low complexity). Residues 360-373 (RHTKARPTKKRKKR) show a composition bias toward basic residues. A compositionally biased stretch (basic and acidic residues) spans 374-385 (VVDLRKQSKPTD). Low complexity predominate over residues 396-409 (TETSTASTTFSSST).

This sequence belongs to the MDM34 family. In terms of assembly, component of the ER-mitochondria encounter structure (ERMES) or MDM complex, composed of MMM1, MDM10, MDM12 and MDM34.

Its subcellular location is the mitochondrion outer membrane. Component of the ERMES/MDM complex, which serves as a molecular tether to connect the endoplasmic reticulum (ER) and mitochondria. Components of this complex are involved in the control of mitochondrial shape and protein biogenesis, and function in nonvesicular lipid trafficking between the ER and mitochondria. MDM34 is required for the interaction of the ER-resident membrane protein MMM1 and the outer mitochondrial membrane-resident beta-barrel protein MDM10. The protein is Mitochondrial distribution and morphology protein 34 of Uncinocarpus reesii (strain UAMH 1704).